The chain runs to 446 residues: METRGRRRAFSHQQDEPEENPGKRPTRSAPLYRHRNQPNANPATLERHYPCSTGRPPTGTVQPKPSQPPQPRSLLDRDAIDHITELWDRLYLLRQSLEKMTMADGLKPLKHFRSLEELLSLGGERLLQDLVKENQHVRSMMNEVTPLLREDGSCISLNYQLQPVIGVIYGPTGCGKSQLLRNLLSTQLINPPPETVFFIAPQVDMIPPSEIKAWEMQICEGNYAPGPEGTIIPQSGTLLPRFIKMAYDELTLEQNYDVSHPDNIFAKAASQGPIAIIMDECMENLGGHKGVSKFFHAFPSKLHDKFPKCTGYTVLVVLHNMNPRRDLGGNIANLKIQAKMHLISPRMHPSQLNRFVNTFTKGLPLAISLLLKDIFQFHAQKPCYDWIIYNTTPEHDALQWSYLHPRDGLMPMYLNIQAHLYRVLENIHKVLNDRDRWSRAYRKRNK.

Residues 1 to 10 are compositionally biased toward basic residues; sequence METRGRRRAF. The tract at residues 1 to 74 is disordered; it reads METRGRRRAF…PSQPPQPRSL (74 aa). 170 to 177 provides a ligand contact to ATP; that stretch reads GPTGCGKS. The segment at 439–446 is DNA-binding; the sequence is RAYRKRNK.

Belongs to the adenoviridae packaging protein 1 family. Homodimer. Part of a genome packaging complex composed of packaging proteins 1, 2 and 3; this complex specifically binds to the packaging sequence on the left end of viral genomic DNA and performs packaging of the viral genome. Interacts with protein 33K.

It is found in the virion. It localises to the host nucleus. The protein resides in the host nucleoplasm. The protein localises to the host nucleolus. Functionally, component of the packaging machinery which encapsidates the viral DNA into preformed capsids and transcriptional activator of the viral major late promoter (MLP). Binds, along with packaging proteins 2 and 3, to the specific packaging sequence on the left end of viral genomic DNA and displays ATPase activity thereby providing the power stroke of the packaging machinery. The activity of packaging protein IVa2 is stimulated by protein 33K which acts as a terminase. May be the protein that pumps DNA into the capsid powered by ATP hydrolysis. Specifically binds to the 5'-CG-3' nucleotides of the repeats making up the packaging sequence. Component of the DEF-A and DEF-B transcription factors that bind downstream elements of the major late promoter (MLP), and stimulate transcription from the MLP after initiation of viral DNA replication. DEF-A is a heterodimer packaging proteins 1 and 2 and DEF-B is a homodimer of packaging protein 1. The protein is Packaging protein 1 of Human adenovirus F serotype 40 (HAdV-40).